A 910-amino-acid polypeptide reads, in one-letter code: Protein CHROMATIN REMODELING 25 (910 aa).

Composition is skewed to acidic residues over residues 1-18 (MEEE…DDSS) and 26-39 (QDSE…ECED). The disordered stretch occupies residues 1-39 (MEEEDEEILSSSDCDDSSDSYKDDSQDSEGENDNPECED). The Helicase ATP-binding domain maps to 198-371 (LHGSANINGC…FAMVNFTNPG (174 aa)). Residue 211 to 218 (DDMGLGKT) participates in ATP binding. The short motif at 322–325 (DEAH) is the DEAH box element. The stretch at 396 to 417 (TEEEKNLAADRSAELSSKVNQF) forms a coiled coil. One can recognise a Helicase C-terminal domain in the interval 538–696 (VLSRLLANLR…QTDNSTRQGN (159 aa)). The disordered stretch occupies residues 828–861 (VSPKTVESEEHNRNQPVNKRAFNKPQQRPREPLQ).

It belongs to the SNF2/RAD54 helicase family. As to quaternary structure, interacts with RAD51. Binds to the geminivirus mungbean yellow mosaic virus (MYMV) and to the tomato leaf curl virus (ToLCV) replication-associated proteins. In terms of tissue distribution, expressed ubiquitously, with the highest levels of expression in flower buds. Present in flower buds (at protein level).

Its subcellular location is the nucleus. In terms of biological role, dissociates RAD51 from nucleoprotein filaments formed on dsDNA. Could be involved in the turnover of RAD51 protein-dsDNA filaments. Addition of RAD54 overcomes inhibition of DNA strand exchange by RAD51 bound to substrate dsDNA. Species preference in the RAD51 dissociation and DNA strand exchange assays underlines the importance of specific RAD54-RAD51 interactions. RAD51 is unable to release dsDNA upon ATP hydrolysis, leaving it stuck on the heteroduplex DNA product after DNA strand exchange. Involved in DNA repair and mitotic recombination. Functions in the homologous recombinational DNA repair (RAD52) pathway. Required for synthesis-dependent strand annealing (SDSA) during double-strand break repair. Its function is as follows. Facilitates geminiviral replication (e.g. geminivirus mungbean yellow mosaic virus (MYMV) and tomato leaf curl virus (ToLCV)). This is Protein CHROMATIN REMODELING 25 (CHR25) from Arabidopsis thaliana (Mouse-ear cress).